The following is a 715-amino-acid chain: Fatty acid oxidation complex subunit alpha (715 aa).

The enoyl-CoA hydratase/isomerase stretch occupies residues M1–A189. D296 is a substrate binding site. The 3-hydroxyacyl-CoA dehydrogenase stretch occupies residues A311–Y715. NAD(+) is bound by residues M325, D344, V401–E403, K408, and S430. The active-site For 3-hydroxyacyl-CoA dehydrogenase activity is the H451. NAD(+) is bound at residue N454. Substrate-binding residues include N501 and Y661.

This sequence in the N-terminal section; belongs to the enoyl-CoA hydratase/isomerase family. It in the C-terminal section; belongs to the 3-hydroxyacyl-CoA dehydrogenase family. Heterotetramer of two alpha chains (FadB) and two beta chains (FadA).

The enzyme catalyses a (3S)-3-hydroxyacyl-CoA + NAD(+) = a 3-oxoacyl-CoA + NADH + H(+). The catalysed reaction is a (3S)-3-hydroxyacyl-CoA = a (2E)-enoyl-CoA + H2O. It carries out the reaction a 4-saturated-(3S)-3-hydroxyacyl-CoA = a (3E)-enoyl-CoA + H2O. It catalyses the reaction (3S)-3-hydroxybutanoyl-CoA = (3R)-3-hydroxybutanoyl-CoA. The enzyme catalyses a (3Z)-enoyl-CoA = a 4-saturated (2E)-enoyl-CoA. The catalysed reaction is a (3E)-enoyl-CoA = a 4-saturated (2E)-enoyl-CoA. It participates in lipid metabolism; fatty acid beta-oxidation. In terms of biological role, involved in the aerobic and anaerobic degradation of long-chain fatty acids via beta-oxidation cycle. Catalyzes the formation of 3-oxoacyl-CoA from enoyl-CoA via L-3-hydroxyacyl-CoA. It can also use D-3-hydroxyacyl-CoA and cis-3-enoyl-CoA as substrate. The polypeptide is Fatty acid oxidation complex subunit alpha (Aeromonas hydrophila subsp. hydrophila (strain ATCC 7966 / DSM 30187 / BCRC 13018 / CCUG 14551 / JCM 1027 / KCTC 2358 / NCIMB 9240 / NCTC 8049)).